The primary structure comprises 712 residues: Lactoperoxidase (712 aa).

An N-terminal signal peptide occupies residues 1 to 22 (MWVCLQLPVFLASVTLFEVAAS). The propeptide occupies 23–100 (DTIAQAASTT…WEESFKRLRR (78 aa)). A glycan (N-linked (GlcNAc...) (complex) asparagine; alternate) is linked at asparagine 106. An N-linked (GlcNAc...) (hybrid) asparagine; alternate glycan is attached at asparagine 106. Intrachain disulfides connect cysteine 123-cysteine 284, cysteine 132-cysteine 145, cysteine 246-cysteine 256, and cysteine 250-cysteine 274. A glycan (N-linked (GlcNAc...) (complex) asparagine; alternate) is linked at asparagine 212. Residue asparagine 212 is glycosylated (N-linked (GlcNAc...) (high mannose) asparagine; alternate). Position 225 (aspartate 225) interacts with heme b. Histidine 226 (proton acceptor) is an active-site residue. A Ca(2+)-binding site is contributed by aspartate 227. Ca(2+) contacts are provided by threonine 301, phenylalanine 303, aspartate 305, and serine 307. A Phosphoserine modification is found at serine 315. Asparagine 322 carries N-linked (GlcNAc...) (high mannose) asparagine glycosylation. The cysteines at positions 354 and 365 are disulfide-linked. The N-linked (GlcNAc...) asparagine glycan is linked to asparagine 358. Glutamate 375 lines the heme b pocket. The N-linked (GlcNAc...) (complex) asparagine; alternate glycan is linked to asparagine 449. Asparagine 449 carries N-linked (GlcNAc...) (hybrid) asparagine; alternate glycosylation. An N-linked (GlcNAc...) (high mannose) asparagine; alternate glycan is attached at asparagine 449. Histidine 468 is a heme b binding site. Tyrosine 482 carries the 3'-nitrotyrosine modification. Disulfide bonds link cysteine 573/cysteine 630 and cysteine 671/cysteine 696.

This sequence belongs to the peroxidase family. XPO subfamily. It depends on Ca(2+) as a cofactor. Heme b is required as a cofactor. Mammary gland; milk.

It is found in the secreted. It localises to the cytoplasm. The enzyme catalyses 2 a phenolic donor + H2O2 = 2 a phenolic radical donor + 2 H2O. It carries out the reaction thiocyanate + H2O2 + H(+) = hypothiocyanous acid + H2O. It catalyses the reaction iodide + H2O2 = hypoiodite + H2O. In terms of biological role, heme-containing oxidoreductase which catalyzes the conversion of thiocyanate (SCN(-)) into antimicrobial agent hypothiocyanous acid (OSCN(-)) in the presence of hydrogen peroxide (H2O2). Also involved in the conversion of iodide (I(-)) into hypoiodite (IO(-)) in the presence of H2O2. Responsible for the inactivation of a wide range of micro-organisms and hence, important component of defense mechanism. Shows antibacterial properties against E.coli, K.pneumoniae, P.aeruginosa, S.sonnei, S.saphrophyticus, S.epidermidis and S.dysenteriae. May protect the udder from infection and may promote growth in newborns. May be implicated in airway host defense against infection. May contribute to maintaining an appropriate H2O2 cellular level, therefore protecting cells from H2O2-caused injuries and inflammation. The protein is Lactoperoxidase of Bubalus bubalis (Domestic water buffalo).